Reading from the N-terminus, the 268-residue chain is Ribosomal RNA small subunit methyltransferase A (268 aa).

S-adenosyl-L-methionine is bound by residues N10, I12, G37, E58, D83, and N107.

The protein belongs to the class I-like SAM-binding methyltransferase superfamily. rRNA adenine N(6)-methyltransferase family. RsmA subfamily.

Its subcellular location is the cytoplasm. The catalysed reaction is adenosine(1518)/adenosine(1519) in 16S rRNA + 4 S-adenosyl-L-methionine = N(6)-dimethyladenosine(1518)/N(6)-dimethyladenosine(1519) in 16S rRNA + 4 S-adenosyl-L-homocysteine + 4 H(+). In terms of biological role, specifically dimethylates two adjacent adenosines (A1518 and A1519) in the loop of a conserved hairpin near the 3'-end of 16S rRNA in the 30S particle. May play a critical role in biogenesis of 30S subunits. In Caldanaerobacter subterraneus subsp. tengcongensis (strain DSM 15242 / JCM 11007 / NBRC 100824 / MB4) (Thermoanaerobacter tengcongensis), this protein is Ribosomal RNA small subunit methyltransferase A.